The following is a 208-amino-acid chain: Kininogen-1b (208 aa).

The first 23 residues, 1 to 23 (MRLWFCLSFFIVLCLEHFPETLA), serve as a signal peptide directing secretion. The segment covering 27-44 (NVPESEEKTEQYLRDLPK) has biased composition (basic and acidic residues). The disordered stretch occupies residues 27–208 (NVPESEEKTE…RGKFHSQSHV (182 aa)).

Belongs to the bradykinin-related peptide family. Expressed by the skin glands.

It localises to the secreted. In vitro, produces constriction of guinea pig ileum smooth muscle. May target bradykinin receptors (BDKRB). The protein is Kininogen-1b of Bombina maxima (Giant fire-bellied toad).